Reading from the N-terminus, the 151-residue chain is Globin CTT-X (151 aa).

Residues 6–150 (TLDAHEVEQV…AFSVIFEVLE (145 aa)) enclose the Globin domain. Positions 64 and 99 each coordinate heme b.

The protein belongs to the globin family. In terms of assembly, homodimer.

The protein is Globin CTT-X (CTT-10) of Chironomus thummi thummi (Midge).